The sequence spans 246 residues: NAD-dependent protein deacetylase (246 aa).

The Deacetylase sirtuin-type domain maps to 1-246 (MKKPDIQQLK…VIEEIVNSNS (246 aa)). Residues Ala-25, Phe-36, Arg-37, Gln-106, Ile-108, Asp-109, and His-124 each contribute to the NAD(+) site. Phe-36 lines the nicotinamide pocket. Residues Ile-108 and Asp-109 each coordinate nicotinamide. The Proton acceptor role is filled by His-124. Residues Cys-132, Cys-135, Cys-152, and Cys-155 each contribute to the Zn(2+) site. Ser-193, Ser-194, Asn-216, and Asp-233 together coordinate NAD(+).

This sequence belongs to the sirtuin family. Class U subfamily. Requires Zn(2+) as cofactor.

It localises to the cytoplasm. The enzyme catalyses N(6)-acetyl-L-lysyl-[protein] + NAD(+) + H2O = 2''-O-acetyl-ADP-D-ribose + nicotinamide + L-lysyl-[protein]. Its function is as follows. NAD-dependent protein deacetylase which modulates the activities of several enzymes which are inactive in their acetylated form. The chain is NAD-dependent protein deacetylase from Staphylococcus epidermidis (strain ATCC 35984 / DSM 28319 / BCRC 17069 / CCUG 31568 / BM 3577 / RP62A).